Reading from the N-terminus, the 158-residue chain is MNQEKLAKLQAQVRIGGKGTARRKKKVVHRTATADDKKLQSSLKKLAVNNIAGIEEVNMIKDDGTVIHFNNPKVQASLSANTFAITGHAEAKPITEMLPGILSQLGADSLTSLRKLAEQFPRQVLDSKAPKSEDIDEEDDDVPDLAENFDEASKNEAN.

The NAC-A/B domain occupies 33–98; that stretch reads TADDKKLQSS…AEAKPITEML (66 aa). The tract at residues 124 to 158 is disordered; that stretch reads VLDSKAPKSEDIDEEDDDVPDLAENFDEASKNEAN. Positions 134 to 150 are enriched in acidic residues; sequence DIDEEDDDVPDLAENFD.

This sequence belongs to the NAC-beta family.

The chain is Transcription factor BTF3 homolog 4 (BTF3L4) from Gallus gallus (Chicken).